The following is a 394-amino-acid chain: Mitogen-activated protein kinase 2 (394 aa).

The span at 1-31 (MRMEGGGGGGHGHHGGGGGGHGHHGGIGGGE) shows a compositional bias: gly residues. Residues 1 to 33 (MRMEGGGGGGHGHHGGGGGGHGHHGGIGGGEAQ) are disordered. One can recognise a Protein kinase domain in the interval 61-347 (VPPIRPVGRG…VDEALCHPYL (287 aa)). ATP-binding positions include 67–75 (VGRGACGII) and K90. D187 (proton acceptor) is an active-site residue. Y221 bears the Phosphotyrosine mark.

The protein belongs to the protein kinase superfamily. CMGC Ser/Thr protein kinase family. MAP kinase subfamily. The phosphorylation on Tyr-221 activates the enzyme. A conserved Thr, which must also be phosphorylated to activate the enzyme in closely related sequences, is replaced by Met-219 in this sequence.

The enzyme catalyses L-seryl-[protein] + ATP = O-phospho-L-seryl-[protein] + ADP + H(+). It carries out the reaction L-threonyl-[protein] + ATP = O-phospho-L-threonyl-[protein] + ADP + H(+). The chain is Mitogen-activated protein kinase 2 (MPK2) from Oryza sativa subsp. japonica (Rice).